Here is a 42-residue protein sequence, read N- to C-terminus: Cytochrome b6-f complex subunit 7 (42 aa).

The helical transmembrane segment at 15–35 (IVTAAVTCIFMVLFGLSLGFA) threads the bilayer.

The protein belongs to the PetM family. As to quaternary structure, the 4 large subunits of the cytochrome b6-f complex are cytochrome b6, subunit IV (17 kDa polypeptide, PetD), cytochrome f and the Rieske protein, while the 4 small subunits are PetG, PetL, PetM and PetN. The complex functions as a dimer.

It localises to the plastid. Its subcellular location is the chloroplast thylakoid membrane. Its function is as follows. Component of the cytochrome b6-f complex, which mediates electron transfer between photosystem II (PSII) and photosystem I (PSI), cyclic electron flow around PSI, and state transitions. This is Cytochrome b6-f complex subunit 7 from Trieres chinensis (Marine centric diatom).